We begin with the raw amino-acid sequence, 206 residues long: Ribosomal RNA small subunit methyltransferase G (206 aa).

S-adenosyl-L-methionine contacts are provided by residues glycine 74, leucine 79, valine 125–glutamate 126, and arginine 140.

It belongs to the methyltransferase superfamily. RNA methyltransferase RsmG family.

It is found in the cytoplasm. The catalysed reaction is guanosine(527) in 16S rRNA + S-adenosyl-L-methionine = N(7)-methylguanosine(527) in 16S rRNA + S-adenosyl-L-homocysteine. Its function is as follows. Specifically methylates the N7 position of guanine in position 527 of 16S rRNA. The polypeptide is Ribosomal RNA small subunit methyltransferase G (Shewanella frigidimarina (strain NCIMB 400)).